The primary structure comprises 247 residues: PsbP domain-containing protein 3, chloroplastic (247 aa).

The N-terminal 26 residues, 1–26 (MAAISPWLSSPQSFSNPRVTITDSRR), are a transit peptide targeting the chloroplast. The N-terminal 54 residues, 27 to 80 (CSSISAAISVLDSSNEEQHRISSRDHVGMKRRDVMLQIASSVFFLPLAISPAFA), are a transit peptide targeting the thylakoid.

The protein belongs to the PsbP family.

Its subcellular location is the plastid. It localises to the chloroplast thylakoid lumen. In Arabidopsis thaliana (Mouse-ear cress), this protein is PsbP domain-containing protein 3, chloroplastic (PPD3).